We begin with the raw amino-acid sequence, 2359 residues long: Neuron navigator 3 (2359 aa).

Residues 77-184 enclose the Calponin-homology (CH) domain; sequence IEDSKIYTDW…LFFSLSRYKQ (108 aa). Polar residues-rich tracts occupy residues 204–226, 233–243, 257–279, and 300–317; these read THTA…SSLT, SKHSGIATSQK, ASSS…FNSI, and QPSS…TSGQ. 2 disordered regions span residues 204–623 and 641–660; these read THTA…QQQH and ENEG…TKMD. Residues 318–329 are compositionally biased toward low complexity; that stretch reads PPASAIPSPSAS. The span at 335 to 352 shows a compositional bias: polar residues; it reads KSMNVKHSATSTMLTVKQ. 2 stretches are compositionally biased toward low complexity: residues 353 to 363 and 427 to 439; these read PSPATSPTPSS and NSGL…TNSS. The segment covering 465 to 491 has biased composition (basic and acidic residues); the sequence is PKEKEEKTRDKNKACAEKSGKEEKDQV. A compositionally biased stretch (low complexity) spans 522-536; the sequence is IPSSSGIPKPGSKVP. Positions 592-623 are enriched in polar residues; that stretch reads ASPSSSCVMQVTHSSGQSPGNGAVQLPQQQQH. Positions 680 to 708 form a coiled coil; it reads EARRMRTVKNIADLRQNLEETMSSLRGTQ. 4 disordered regions span residues 878–1315, 1413–1472, 1653–1758, and 1829–1855; these read ADSW…SPLF, LSES…AMSS, GALN…KPSQ, and ETGN…SRQS. 2 stretches are compositionally biased toward low complexity: residues 883–896 and 904–916; these read DSSS…DTLD and NTTS…SNIT. The segment covering 917–926 has biased composition (polar residues); that stretch reads VPSRKNTQLK. Residues 943-960 are compositionally biased toward basic and acidic residues; it reads EELKKAEGDCDSHGDGAA. Composition is skewed to polar residues over residues 978–989 and 997–1013; these read QKASLSVSQTGS and QGGT…TSAL. A compositionally biased stretch (basic and acidic residues) spans 1017 to 1029; the sequence is GKTDDAKASEKGK. 2 stretches are compositionally biased toward low complexity: residues 1077 to 1095 and 1160 to 1173; these read GAST…GSAT and SSTS…SSKS. Residues 1190 to 1199 are compositionally biased toward polar residues; it reads GRSSPVTVNQ. Composition is skewed to low complexity over residues 1209 to 1229, 1256 to 1266, and 1274 to 1285; these read VSDS…TSAS, GAKAGGKSASA, and SSSVVLSPSTSL. The span at 1299–1308 shows a compositional bias: gly residues; that stretch reads GSMGSAGGLS. The segment covering 1439 to 1448 has biased composition (basic and acidic residues); the sequence is NQEEGKEWLR. The segment covering 1449–1461 has biased composition (polar residues); sequence SHSTGGLQDTGNQ. Ser1462 and Ser1466 each carry phosphoserine. Low complexity predominate over residues 1462–1472; the sequence is SPLVSPSAMSS. A coiled-coil region spans residues 1565 to 1656; it reads AEEKAHSEQI…AQAAIQGALN (92 aa). 2 stretches are compositionally biased toward low complexity: residues 1675 to 1692 and 1749 to 1758; these read SVSS…GSGN and SGSSSMKPSQ. Residues 1768–1835 are a coiled coil; it reads EAEAEIILQL…LKAETGNTAK (68 aa). Residues 1841–1855 show a composition bias toward low complexity; that stretch reads SDSSSTASSSSSRQS.

Belongs to the Nav/unc-53 family. In terms of tissue distribution, present in neurons from central and peripheral nervous systems (at protein level). Highly expressed in brain cortex, midbrain, cerebellum and hippocampus.

The protein resides in the nucleus outer membrane. Functionally, plays a role in cell migration. May be involved in neuron regeneration. May regulate IL2 production by T-cells. In Mus musculus (Mouse), this protein is Neuron navigator 3 (Nav3).